Here is a 289-residue protein sequence, read N- to C-terminus: Urease accessory protein UreD (289 aa).

This sequence belongs to the UreD family. In terms of assembly, ureD, UreF and UreG form a complex that acts as a GTP-hydrolysis-dependent molecular chaperone, activating the urease apoprotein by helping to assemble the nickel containing metallocenter of UreC. The UreE protein probably delivers the nickel.

The protein localises to the cytoplasm. In terms of biological role, required for maturation of urease via the functional incorporation of the urease nickel metallocenter. The polypeptide is Urease accessory protein UreD (Xanthobacter autotrophicus (strain ATCC BAA-1158 / Py2)).